Reading from the N-terminus, the 232-residue chain is Phosphatidylserine decarboxylase proenzyme (232 aa).

S190 functions as the Schiff-base intermediate with substrate; via pyruvic acid in the catalytic mechanism. The residue at position 190 (S190) is a Pyruvic acid (Ser); by autocatalysis.

This sequence belongs to the phosphatidylserine decarboxylase family. PSD-A subfamily. In terms of assembly, heterodimer of a large membrane-associated beta subunit and a small pyruvoyl-containing alpha subunit. Requires pyruvate as cofactor. Is synthesized initially as an inactive proenzyme. Formation of the active enzyme involves a self-maturation process in which the active site pyruvoyl group is generated from an internal serine residue via an autocatalytic post-translational modification. Two non-identical subunits are generated from the proenzyme in this reaction, and the pyruvate is formed at the N-terminus of the alpha chain, which is derived from the carboxyl end of the proenzyme. The post-translation cleavage follows an unusual pathway, termed non-hydrolytic serinolysis, in which the side chain hydroxyl group of the serine supplies its oxygen atom to form the C-terminus of the beta chain, while the remainder of the serine residue undergoes an oxidative deamination to produce ammonia and the pyruvoyl prosthetic group on the alpha chain.

The protein localises to the cell membrane. The enzyme catalyses a 1,2-diacyl-sn-glycero-3-phospho-L-serine + H(+) = a 1,2-diacyl-sn-glycero-3-phosphoethanolamine + CO2. The protein operates within phospholipid metabolism; phosphatidylethanolamine biosynthesis; phosphatidylethanolamine from CDP-diacylglycerol: step 2/2. In terms of biological role, catalyzes the formation of phosphatidylethanolamine (PtdEtn) from phosphatidylserine (PtdSer). The sequence is that of Phosphatidylserine decarboxylase proenzyme from Rhodopseudomonas palustris (strain ATCC BAA-98 / CGA009).